The following is a 469-amino-acid chain: Ribulose bisphosphate carboxylase large chain (469 aa).

Lys-8 is subject to N6,N6,N6-trimethyllysine. Residues Asn-117 and Thr-167 each contribute to the substrate site. Residue Lys-169 is the Proton acceptor of the active site. Residue Lys-171 coordinates substrate. Mg(2+) is bound by residues Lys-195, Asp-197, and Glu-198. Lys-195 is modified (N6-carboxylysine). Catalysis depends on His-288, which acts as the Proton acceptor. Positions 289, 321, and 373 each coordinate substrate.

The protein belongs to the RuBisCO large chain family. Type I subfamily. In terms of assembly, heterohexadecamer of 8 large chains and 8 small chains; disulfide-linked. The disulfide link is formed within the large subunit homodimers. It depends on Mg(2+) as a cofactor. Post-translationally, the disulfide bond which can form in the large chain dimeric partners within the hexadecamer appears to be associated with oxidative stress and protein turnover.

The protein localises to the plastid. The protein resides in the chloroplast. The catalysed reaction is 2 (2R)-3-phosphoglycerate + 2 H(+) = D-ribulose 1,5-bisphosphate + CO2 + H2O. The enzyme catalyses D-ribulose 1,5-bisphosphate + O2 = 2-phosphoglycolate + (2R)-3-phosphoglycerate + 2 H(+). Its function is as follows. RuBisCO catalyzes two reactions: the carboxylation of D-ribulose 1,5-bisphosphate, the primary event in carbon dioxide fixation, as well as the oxidative fragmentation of the pentose substrate in the photorespiration process. Both reactions occur simultaneously and in competition at the same active site. The polypeptide is Ribulose bisphosphate carboxylase large chain (Akania bidwillii (Turnipwood)).